The sequence spans 374 residues: S-adenosylmethionine:tRNA ribosyltransferase-isomerase (374 aa).

The protein belongs to the QueA family. In terms of assembly, monomer.

Its subcellular location is the cytoplasm. It carries out the reaction 7-aminomethyl-7-carbaguanosine(34) in tRNA + S-adenosyl-L-methionine = epoxyqueuosine(34) in tRNA + adenine + L-methionine + 2 H(+). It participates in tRNA modification; tRNA-queuosine biosynthesis. Transfers and isomerizes the ribose moiety from AdoMet to the 7-aminomethyl group of 7-deazaguanine (preQ1-tRNA) to give epoxyqueuosine (oQ-tRNA). The sequence is that of S-adenosylmethionine:tRNA ribosyltransferase-isomerase from Prochlorococcus marinus (strain AS9601).